The primary structure comprises 61 residues: Small ribosomal subunit protein uS14 (61 aa).

4 residues coordinate Zn(2+): Cys-24, Cys-27, Cys-40, and Cys-43.

It belongs to the universal ribosomal protein uS14 family. Zinc-binding uS14 subfamily. As to quaternary structure, part of the 30S ribosomal subunit. Contacts proteins S3 and S10. Zn(2+) is required as a cofactor.

Its function is as follows. Binds 16S rRNA, required for the assembly of 30S particles and may also be responsible for determining the conformation of the 16S rRNA at the A site. The protein is Small ribosomal subunit protein uS14 of Borrelia duttonii (strain Ly).